The sequence spans 542 residues: MSARIGRLRGLCLRHVSSTRQTSPIQRRSLNQFISRVQQHDQPALEQRQFRLAVKDNIATVSPNSEEETPLTTTCGSNFLANYRSPFEATIVSQLRSRGALLVGKTNLDEFGMGSHSVHTAFGAVAQEGEHEQQAVKHSAGGSSGGSAVAVATGEADIALGTDTGGSVRLPAGYTGVVGFKPSYGMLSRYGVVPYANSLDTVGLLAKEVRPIAELILGGADKVTRGLWAEHDPLDPTSLSHGARRRCASQRDCYTGPLPKDPYPLKNLKFGLPLEYNITELSPSIRHSWSAAAAKLQSLGARLVPVSLPSTRHALSAYYVIAPAEASSNLAKYDGIRYGTRFTSPTESDAAISEGPEGREEEEEGILYARARTAGFGDEVKRRILLGAYTLSSAAMDNYFLKAQKVRRLVRRDFNRVFALPNPLLDKPERFELSELPETVGLEDKWGPTEVDFLLCPTAPTTAPRLDEVLSEEEKDPVSAYMNDVFTVPASLAGLPAISVPMRVEDKEGAGMAGLQLIGQYWDDARLLAVAETVADVVREEL.

Active-site charge relay system residues include lysine 55 and serine 143. The active-site Acyl-ester intermediate is the serine 167.

Belongs to the amidase family. GatA subfamily. In terms of assembly, subunit of the heterotrimeric GatCAB amidotransferase (AdT) complex, composed of A, B and C subunits.

It localises to the mitochondrion. The catalysed reaction is L-glutamyl-tRNA(Gln) + L-glutamine + ATP + H2O = L-glutaminyl-tRNA(Gln) + L-glutamate + ADP + phosphate + H(+). Allows the formation of correctly charged Gln-tRNA(Gln) through the transamidation of misacylated Glu-tRNA(Gln) in the mitochondria. The reaction takes place in the presence of glutamine and ATP through an activated gamma-phospho-Glu-tRNA(Gln). This Neurospora crassa (strain ATCC 24698 / 74-OR23-1A / CBS 708.71 / DSM 1257 / FGSC 987) protein is Glutamyl-tRNA(Gln) amidotransferase subunit A, mitochondrial.